Here is a 545-residue protein sequence, read N- to C-terminus: MNLGRCPLAPRSANIVLPKHDAVSKQKEYRIEEKTNEAQREEIITWKDNREDEGEVKTDFEVVNNENIITTTPKHQTVITPKSYRKSVKRIKHDAPQNEDIPVMKGLAPINADTESKAESMAAGKVLGSKNSSQKARLQEWKRQYKKAFPHFRFYLDGCDPSVAHRVKKQIQQLGGHVETFFSGNVTHVATVRAIQDVSVKYAKQDVITKARQLNMKIWSMEKLCNRVLKTLMENDQCTTNAPTKQGNDLSYLLYVEKVQGTNERDLSVPRQDFVHFRGPYLYVHDIANIYKPILLREWQKPLPDRDVPWPTFRATSIGRCPFVPETKYRLSTSKSLVAKNDQQLLQRQSQEPSLILRANSMKASLPDISNTGISGMNTNTTYNTNINNTPQTAISGITQDTSPSIRTNCHHCLDDGMQASGIVQSNLTSAAMSNNSAIRSGSAASVPVVTINGRDIAELKKRIIQQKSGMIGKDYSYKAMLHNTSQRKIRVDAKPGYCENCREKFDNFESHIRSSRHRRFAENNDNFKDLDELFALVQRPLRPD.

The DBF4-type zinc finger occupies 492-541; the sequence is VDAKPGYCENCREKFDNFESHIRSSRHRRFAENNDNFKDLDELFALVQRP. Positions 499, 502, 512, and 518 each coordinate Zn(2+).

As to quaternary structure, associates with hsk1. Interacts with mcm10. Post-translationally, hyperphosphorylated at the G1/S and S-phases of the cell cycle.

It localises to the nucleus. Activates hsk1 kinase and is essential for G1/S transition. Has a role in S-phase checkpoint control induced by replication fork blocks after nucleotide deprivation and DNA damage. In Schizosaccharomyces pombe (strain 972 / ATCC 24843) (Fission yeast), this protein is Hsk1-interacting molecule 1 (him1).